Reading from the N-terminus, the 961-residue chain is Mitogen-activated protein kinase kinase kinase 13-A (961 aa).

Positions 88–118 are disordered; sequence LRDQDEPENTAPQGSSHSGDGGSYSGNEDIR. Positions 169-410 constitute a Protein kinase domain; that stretch reads ISELQWLGSG…FRQILMHLDI (242 aa). ATP is bound by residues 175–183 and lysine 196; that span reads LGSGAQGAV. The active-site Proton acceptor is aspartate 280. Leucine-zipper stretches follow at residues 434–455 and 487–508; these read VKKH…DEEL and LSAI…EQAV. The stretch at 458-497 forms a coiled coil; that stretch reads RRREELRHALDIREHYERKLERANNLYMELSAIMLQLEVR. 3 disordered regions span residues 513-600, 615-637, and 799-883; these read PGTY…SKGS, ALSQ…CSPY, and RRIR…KLDD. Residues 560–578 are compositionally biased toward low complexity; that stretch reads SAEGSAASASPISGSPKTS. Over residues 584-596 the composition is skewed to basic residues; that stretch reads NRYRSKPRHRRVN. Positions 810 to 823 are enriched in acidic residues; that stretch reads ESSEEEEGEVDSEV. Residues 811-824 form an acidic region; sequence SSEEEEGEVDSEVE. Over residues 837-851 the composition is skewed to polar residues; sequence KCQSYSTFSSENFSV.

It belongs to the protein kinase superfamily. Ser/Thr protein kinase family.

The protein localises to the cytoplasm. The protein resides in the membrane. It carries out the reaction L-seryl-[protein] + ATP = O-phospho-L-seryl-[protein] + ADP + H(+). The catalysed reaction is L-threonyl-[protein] + ATP = O-phospho-L-threonyl-[protein] + ADP + H(+). May have a role in the JNK signaling pathway. The sequence is that of Mitogen-activated protein kinase kinase kinase 13-A (map3k13-a) from Xenopus laevis (African clawed frog).